The chain runs to 274 residues: Thiamine kinase (274 aa).

Belongs to the thiamine kinase family.

It catalyses the reaction thiamine + ATP = thiamine phosphate + ADP + H(+). It participates in cofactor biosynthesis; thiamine diphosphate biosynthesis; thiamine phosphate from thiamine: step 1/1. Its function is as follows. Catalyzes the ATP-dependent phosphorylation of thiamine to thiamine phosphate. Is involved in thiamine salvage. The protein is Thiamine kinase of Salmonella dublin (strain CT_02021853).